A 110-amino-acid chain; its full sequence is PTS system oligo-beta-mannoside-specific EIIA component (110 aa).

The PTS EIIA type-3 domain occupies 9–107 (LTDEQISFQL…VKEMLDLFKT (99 aa)). Histidine 83 serves as the catalytic Tele-phosphohistidine intermediate. Residue histidine 83 is modified to Phosphohistidine; by HPr.

It localises to the cytoplasm. The phosphoenolpyruvate-dependent sugar phosphotransferase system (sugar PTS), a major carbohydrate active transport system, catalyzes the phosphorylation of incoming sugar substrates concomitantly with their translocation across the cell membrane. The enzyme II GmuABC PTS system is involved in the transport of oligo-glucomannans such as cellobiose or mannobiose. The sequence is that of PTS system oligo-beta-mannoside-specific EIIA component from Bacillus subtilis (strain 168).